The chain runs to 170 residues: Vimentin A1 (170 aa).

Residues 1-10 show a composition bias toward polar residues; it reads DLTEAANKSN. The tract at residues 1–20 is disordered; sequence DLTEAANKSNEALRLAKQES. The tract at residues 1–111 is coil 2; that stretch reads DLTEAANKSN…ATYRKLLEGE (111 aa). An IF rod domain is found at 1-115; sequence DLTEAANKSN…KLLEGEESRI (115 aa). Residues 112–170 form a tail region; that stretch reads ESRISTPLPNFSSFNLRETMLELKPNIESTFTKKVLIKTIETRDGQVLNESTQNHDDLE.

This sequence belongs to the intermediate filament family. As to quaternary structure, homomer. One of the most prominent phosphoproteins in various cells of mesenchymal origin. Phosphorylation is enhanced during cell division, at which time vimentin filaments are significantly reorganized. In terms of tissue distribution, expressed in low amounts in retina, optic nerve, and brain and in higher amounts in spinal cord.

In terms of biological role, vimentins are class-III intermediate filaments found in various non-epithelial cells, especially mesenchymal cells. Vimentin is attached to the nucleus, endoplasmic reticulum, and mitochondria, either laterally or terminally. In Carassius auratus (Goldfish), this protein is Vimentin A1.